The sequence spans 317 residues: Pectinesterase 31 (317 aa).

Positions 91 and 121 each coordinate substrate. Catalysis depends on Asp144, which acts as the Proton donor. The Nucleophile role is filled by Asp165. 2 residues coordinate substrate: Arg222 and Trp224.

It belongs to the pectinesterase family. As to expression, expressed in siliques.

It catalyses the reaction [(1-&gt;4)-alpha-D-galacturonosyl methyl ester](n) + n H2O = [(1-&gt;4)-alpha-D-galacturonosyl](n) + n methanol + n H(+). Its pathway is glycan metabolism; pectin degradation; 2-dehydro-3-deoxy-D-gluconate from pectin: step 1/5. With respect to regulation, does not require salt for activity. Not inhibited by kiwi pectin methylesterase inhibitor (PMEI). In terms of biological role, acts in the modification of cell walls via demethylesterification of cell wall pectin. Acts in a blockwise manner, resulting in a cell wall rigidification. This chain is Pectinesterase 31 (PME31), found in Arabidopsis thaliana (Mouse-ear cress).